The chain runs to 335 residues: Serpentine receptor class alpha-13 (335 aa).

The Extracellular segment spans residues 1–22 (MAIVSSENRTCADEKLLALYQS). The helical transmembrane segment at 23–43 (WSYIASIVFNCLVPTISTYFL) threads the bilayer. Residues 44 to 61 (GRAIFQLCNQATIQYSTR) are Cytoplasmic-facing. The chain crosses the membrane as a helical span at residues 62–82 (ILLIATILFAACHQVSYFAFK). The Extracellular portion of the chain corresponds to 83-107 (IDLLHTMFFKLDQPCFLQRSSYDCR). The helical transmembrane segment at 108–128 (FISIAQTTGVVGMALTGLAMS) threads the bilayer. The Cytoplasmic segment spans residues 129–149 (TDRALALTFPADYHKLKSVPR). A helical membrane pass occupies residues 150–170 (VVLSVFVFIVSFSTWFLLTMN). The Extracellular segment spans residues 171-192 (DPLTGYLNHCGFYPSYSVANFQ). A helical transmembrane segment spans residues 193–213 (LMLDVILYLAIFNLIWDVILF). The Cytoplasmic segment spans residues 214-235 (YYARQQILWRRSYQFQKRYEAR). The helical transmembrane segment at 236-255 (ISLNCTQAVFVISICQCISN) threads the bilayer. Over 256-278 (GANSGLMRLLMMIGTSITSVTYS) the chain is Extracellular. The helical transmembrane segment at 279–299 (SLLSLFYTAPYSCILLPILMM) threads the bilayer. Topologically, residues 300-335 (RISEYIREQRTIGILSLRSEKPGLEEHHQRMRAAWS) are cytoplasmic.

The protein belongs to the nematode receptor-like protein sra family.

The protein resides in the membrane. In terms of biological role, chemosensory receptor that negatively regulates RAS/MAPK signaling during vulva induction and the negative regulation of olfaction of volitile attractants. Required for the suppression of vulval induction in response to food starvation. Signaling acts through the GPA-5 G-alpha protein subunit. The chain is Serpentine receptor class alpha-13 from Caenorhabditis briggsae.